The primary structure comprises 252 residues: 2-succinyl-6-hydroxy-2,4-cyclohexadiene-1-carboxylate synthase (252 aa).

The protein belongs to the AB hydrolase superfamily. MenH family. As to quaternary structure, monomer.

The catalysed reaction is 5-enolpyruvoyl-6-hydroxy-2-succinyl-cyclohex-3-ene-1-carboxylate = (1R,6R)-6-hydroxy-2-succinyl-cyclohexa-2,4-diene-1-carboxylate + pyruvate. It participates in quinol/quinone metabolism; 1,4-dihydroxy-2-naphthoate biosynthesis; 1,4-dihydroxy-2-naphthoate from chorismate: step 3/7. It functions in the pathway quinol/quinone metabolism; menaquinone biosynthesis. In terms of biological role, catalyzes a proton abstraction reaction that results in 2,5-elimination of pyruvate from 2-succinyl-5-enolpyruvyl-6-hydroxy-3-cyclohexene-1-carboxylate (SEPHCHC) and the formation of 2-succinyl-6-hydroxy-2,4-cyclohexadiene-1-carboxylate (SHCHC). This chain is 2-succinyl-6-hydroxy-2,4-cyclohexadiene-1-carboxylate synthase, found in Shigella flexneri serotype 5b (strain 8401).